Consider the following 274-residue polypeptide: tRNA pseudouridine synthase A (274 aa).

The active-site Nucleophile is the D51. Y109 contributes to the substrate binding site.

It belongs to the tRNA pseudouridine synthase TruA family. As to quaternary structure, homodimer.

The catalysed reaction is uridine(38/39/40) in tRNA = pseudouridine(38/39/40) in tRNA. Its function is as follows. Formation of pseudouridine at positions 38, 39 and 40 in the anticodon stem and loop of transfer RNAs. The polypeptide is tRNA pseudouridine synthase A (Acidovorax sp. (strain JS42)).